Consider the following 286-residue polypeptide: Shikimate dehydrogenase (NADP(+)) (286 aa).

Shikimate contacts are provided by residues 19-21 (SVS) and threonine 66. Residue lysine 70 is the Proton acceptor of the active site. The shikimate site is built by asparagine 91 and aspartate 106. NADP(+) is bound by residues 130–134 (GAGGS) and alanine 225. Tyrosine 227 serves as a coordination point for shikimate. Glycine 248 provides a ligand contact to NADP(+).

The protein belongs to the shikimate dehydrogenase family. Homodimer.

It carries out the reaction shikimate + NADP(+) = 3-dehydroshikimate + NADPH + H(+). The protein operates within metabolic intermediate biosynthesis; chorismate biosynthesis; chorismate from D-erythrose 4-phosphate and phosphoenolpyruvate: step 4/7. Functionally, involved in the biosynthesis of the chorismate, which leads to the biosynthesis of aromatic amino acids. Catalyzes the reversible NADPH linked reduction of 3-dehydroshikimate (DHSA) to yield shikimate (SA). In Dehalococcoides mccartyi (strain ATCC BAA-2266 / KCTC 15142 / 195) (Dehalococcoides ethenogenes (strain 195)), this protein is Shikimate dehydrogenase (NADP(+)).